A 110-amino-acid polypeptide reads, in one-letter code: UPF0145 protein (110 aa).

This sequence belongs to the UPF0145 family.

This is UPF0145 protein from Listeria welshimeri.